The primary structure comprises 158 residues: Protein Smg homolog (158 aa).

Belongs to the Smg family.

The polypeptide is Protein Smg homolog (Vibrio cholerae serotype O1 (strain ATCC 39315 / El Tor Inaba N16961)).